The following is a 468-amino-acid chain: N-acetyltransferase SLI1 (468 aa).

The protein resides in the endoplasmic reticulum. In terms of biological role, confers resistance to the sphingolipid biosynthesis inhibitor drug myriocin (ISP-1). Inactivates ISP-1 by converting it into N-acetyl-myriocin. Cooperates with YPK1 in mediating resistance to myriocin. This Saccharomyces cerevisiae (strain ATCC 204508 / S288c) (Baker's yeast) protein is N-acetyltransferase SLI1 (SLI1).